The following is a 1649-amino-acid chain: PHD and RING finger domain-containing protein 1 (1649 aa).

The tract at residues 1-79 (MDDDSLDELV…RSGSEDSEDD (79 aa)) is disordered. At S5 the chain carries Phosphoserine. The segment covering 54 to 79 (TDGEDEGASEEEDLEDRSGSEDSEDD) has biased composition (acidic residues). Residues 108-149 (CPICLNAFRDQAVGTPENCAHYFCLDCIVEWSKNANSCPVDR) form an RING-type; degenerate zinc finger. The PHD-type zinc finger occupies 183–233 (PTFCEVCGRSDREDRLLLCDGCDAGYHMECLDPPLQEVPVDEWFCPECAAP). The tract at residues 324 to 398 (VYQRPLTPRT…TRSRIARTLG (75 aa)) is disordered. T330 is subject to Phosphothreonine. Residues 334–353 (PARRKRKTRRRKKVPGRKKT) show a composition bias toward basic residues. Positions 354 to 366 (PSGPSAKSKSSAT) are enriched in low complexity. Basic residues predominate over residues 367 to 382 (RSKKRQHRVKKRRGKK). S445 and S455 each carry phosphoserine. Disordered regions lie at residues 534–600 (KRAA…GAPV), 644–871 (SAAS…PKAQ), 888–1240 (FGTE…KAPL), and 1281–1395 (IQLD…PLLR). The segment covering 568 to 589 (SPAQGPSGNRPQSTGLSCQGRS) has biased composition (polar residues). 2 stretches are compositionally biased toward basic and acidic residues: residues 685–697 (IRRDDGGGRRDAA) and 727–742 (TRAESEASSRVPREPG). Residues 786-796 (AHSSQLSSPGF) show a composition bias toward polar residues. A compositionally biased stretch (basic and acidic residues) spans 802 to 812 (PVDDKEQRKEN). Phosphoserine occurs at positions 814, 845, 846, 864, 867, and 915. Polar residues-rich tracts occupy residues 835-848 (PTGSDSSAPGSSPE) and 859-871 (ITRTISINSPKAQ). A Phosphothreonine modification is found at T917. A phosphoserine mark is found at S936, S973, and S991. Residues 988 to 999 (RPPSRSRSTSSS) show a composition bias toward low complexity. A compositionally biased stretch (basic residues) spans 1000 to 1011 (RSRKKAKRKRVS). A compositionally biased stretch (basic and acidic residues) spans 1012–1030 (REHGRTRSGTRSESRDRSS). Residues 1043 to 1053 (RRQRSKAKSRR) are compositionally biased toward basic residues. The segment covering 1054 to 1063 (SSSDRSSSRE) has biased composition (basic and acidic residues). Over residues 1064-1090 (RAKRKKAKDKSREHRRGPWGHSRRTSR) the composition is skewed to basic residues. Residues 1091–1101 (SRSGSPGSSSY) show a composition bias toward low complexity. Residues 1106-1118 (SRKKKKRRSASRP) show a composition bias toward basic residues. S1124 and S1128 each carry phosphoserine. Basic and acidic residues-rich tracts occupy residues 1141–1151 (RSHERPDRKES) and 1181–1198 (REKWPQTRSHSPERKGAV). 2 positions are modified to phosphoserine: S1202 and S1229. The span at 1284-1297 (DDMSSPPSPESTDS) shows a compositional bias: low complexity. The span at 1345–1356 (HLLRPDAAEKAE) shows a compositional bias: basic and acidic residues. Phosphoserine occurs at positions 1359, 1360, and 1371. Phosphothreonine is present on T1404. Disordered regions lie at residues 1407 to 1439 (LQESESSAPAEDRAPRAPLHRPQKPREGAWDME), 1455 to 1486 (FPSHVLPEPGFPDTDPSQVYSPGLPPAPAQPS), 1526 to 1556 (TPASEPASQATAASNSEEKTPAPRLAAEKTK), and 1630 to 1649 (MRRHKKPEAGEEPPTQGAEG). Positions 1531–1540 (PASQATAASN) are enriched in polar residues. Positions 1541-1556 (SEEKTPAPRLAAEKTK) are enriched in basic and acidic residues. A coiled-coil region spans residues 1549 to 1579 (RLAAEKTKKEEYMKKLHMQERAVEEVKLAIK).

In terms of assembly, interacts with POLR2A (via the C-terminal domain).

The protein is PHD and RING finger domain-containing protein 1 (PHRF1) of Homo sapiens (Human).